Reading from the N-terminus, the 118-residue chain is Small ribosomal subunit protein uS13 (118 aa).

A disordered region spans residues 94 to 118; it reads GLPVRGQRTKTNARTRKGPRKPIKK.

It belongs to the universal ribosomal protein uS13 family. In terms of assembly, part of the 30S ribosomal subunit. Forms a loose heterodimer with protein S19. Forms two bridges to the 50S subunit in the 70S ribosome.

Functionally, located at the top of the head of the 30S subunit, it contacts several helices of the 16S rRNA. In the 70S ribosome it contacts the 23S rRNA (bridge B1a) and protein L5 of the 50S subunit (bridge B1b), connecting the 2 subunits; these bridges are implicated in subunit movement. Contacts the tRNAs in the A and P-sites. The polypeptide is Small ribosomal subunit protein uS13 (Haemophilus ducreyi (strain 35000HP / ATCC 700724)).